The primary structure comprises 206 residues: Probable GTP-binding protein EngB (206 aa).

Positions 23–202 (HTAEVAFVGR…WGALLDTFGK (180 aa)) constitute an EngB-type G domain. GTP contacts are provided by residues 31 to 38 (GRSNVGKS), 58 to 62 (GRTRT), 83 to 86 (DLPG), 150 to 153 (TKVD), and 181 to 183 (FSS). Positions 38 and 60 each coordinate Mg(2+).

The protein belongs to the TRAFAC class TrmE-Era-EngA-EngB-Septin-like GTPase superfamily. EngB GTPase family. Mg(2+) serves as cofactor.

Necessary for normal cell division and for the maintenance of normal septation. The chain is Probable GTP-binding protein EngB from Myxococcus xanthus (strain DK1622).